A 235-amino-acid chain; its full sequence is Ribonuclease PH (235 aa).

Phosphate contacts are provided by residues Arg86 and 124 to 126 (GTR).

It belongs to the RNase PH family. Homohexameric ring arranged as a trimer of dimers.

The enzyme catalyses tRNA(n+1) + phosphate = tRNA(n) + a ribonucleoside 5'-diphosphate. Functionally, phosphorolytic 3'-5' exoribonuclease that plays an important role in tRNA 3'-end maturation. Removes nucleotide residues following the 3'-CCA terminus of tRNAs; can also add nucleotides to the ends of RNA molecules by using nucleoside diphosphates as substrates, but this may not be physiologically important. Probably plays a role in initiation of 16S rRNA degradation (leading to ribosome degradation) during starvation. In Francisella philomiragia subsp. philomiragia (strain ATCC 25017 / CCUG 19701 / FSC 153 / O#319-036), this protein is Ribonuclease PH.